A 325-amino-acid chain; its full sequence is MESGSFPVINMELLQGSQRPAAMALLRDACENWGFFELLNHGISHELMNRVEAVNKEHYRRFREQRFKEFASKTLDSVENVDPDNLDWESTFFLRHLPTSNISQIPDLDDDCRATMKEFARELEKLAERLLDLLCEDLGLEKGYLKRVFCGGSDGLPTFGTKVSNYPPCPKPDLIKGLRAHTDAGGIILLFQDDKVSGLQLLKDREWIEVPPLRYSIVVNIGDQLEVITNGKYKSVLHRVVAQTDGNRMSIASFYNPGSDAVIFPAPALVEKEAEEEEKKEIYPKFVFQDYMNLYIRKKFEAKEPRFEAMKSMEIVMSSQPIPTA.

Positions 157 to 257 (PTFGTKVSNY…RMSIASFYNP (101 aa)) constitute a Fe2OG dioxygenase domain. Fe cation is bound by residues His181, Asp183, and His238.

This sequence belongs to the iron/ascorbate-dependent oxidoreductase family. Requires Fe cation as cofactor.

It catalyses the reaction 1-aminocyclopropane-1-carboxylate + L-ascorbate + O2 = ethene + L-dehydroascorbate + hydrogen cyanide + CO2 + 2 H2O. The protein operates within alkene biosynthesis; ethylene biosynthesis via S-adenosyl-L-methionine; ethylene from S-adenosyl-L-methionine: step 2/2. The protein is 1-aminocyclopropane-1-carboxylate oxidase 2 (ACO2) of Doritaenopsis sp. (Moth orchid).